A 184-amino-acid polypeptide reads, in one-letter code: Large ribosomal subunit protein uL15 (184 aa).

The disordered stretch occupies residues 1 to 55 (MDLSSLSPAKGSVKNKKRVGRGQGSGNGTTAGKGNKGQQSRSGYKRPVSEGGQMP). Gly residues predominate over residues 21-35 (RGQGSGNGTTAGKGN).

It belongs to the universal ribosomal protein uL15 family. In terms of assembly, part of the 50S ribosomal subunit.

Binds to the 23S rRNA. The polypeptide is Large ribosomal subunit protein uL15 (Prosthecochloris aestuarii (strain DSM 271 / SK 413)).